A 147-amino-acid polypeptide reads, in one-letter code: Hemoglobin subunit beta (147 aa).

An N-acetylvaline modification is found at valine 2. Positions 3 to 147 (HLTGEEKAAV…VANALAHKYH (145 aa)) constitute a Globin domain. Position 13 is a phosphothreonine (threonine 13). Serine 45 carries the post-translational modification Phosphoserine. An N6-acetyllysine modification is found at lysine 60. Heme b is bound at residue histidine 64. Residue lysine 83 is modified to N6-acetyllysine. Histidine 93 is a heme b binding site. Cysteine 94 bears the S-nitrosocysteine mark. Position 145 is an N6-acetyllysine (lysine 145).

This sequence belongs to the globin family. As to quaternary structure, heterotetramer of two alpha chains and two beta chains. Red blood cells.

Functionally, involved in oxygen transport from the lung to the various peripheral tissues. The polypeptide is Hemoglobin subunit beta (HBB) (Ailuropoda melanoleuca (Giant panda)).